Here is a 151-residue protein sequence, read N- to C-terminus: MIHLQHTPPAVTALMIPAVLSCWSLHPHQIYYLHSTYLCMVILMKVHLRVFIEVENLGRVMNILADEGVTGFYIVEYKGVSPTEWKGFSVKEDPESAISLIHDYARDAVLICSVVDEELVEPIVNRFGEELASEKYTIIEIPIRRIIVNSP.

This sequence to M.jannaschii MJ1244 and MJ1245.

This is an uncharacterized protein from Methanothermobacter thermautotrophicus (strain ATCC 29096 / DSM 1053 / JCM 10044 / NBRC 100330 / Delta H) (Methanobacterium thermoautotrophicum).